Here is a 126-residue protein sequence, read N- to C-terminus: Fumarate reductase subunit C (126 aa).

The next 3 helical transmembrane spans lie at 30-50, 64-84, and 105-125; these read IFVA…GAGG, VVVV…VTWF, and VLAG…WMVL.

The protein belongs to the FrdC family. In terms of assembly, part of an enzyme complex containing four subunits: a flavoprotein (FrdA), an iron-sulfur protein (FrdB), and two hydrophobic anchor proteins (FrdC and FrdD).

It is found in the cell membrane. Anchors the catalytic components of the fumarate reductase complex to the cell membrane, binds quinones. In Mycobacterium tuberculosis (strain ATCC 25177 / H37Ra), this protein is Fumarate reductase subunit C.